We begin with the raw amino-acid sequence, 250 residues long: ATP synthase subunit a (250 aa).

Transmembrane regions (helical) follow at residues 29–49 (ASLF…FATS), 84–104 (FFPL…LGMF), 114–134 (IIVT…YGFY), 143–163 (VFVP…IEII), 193–213 (FVAS…LPLI), and 216–236 (VALT…FAVL).

It belongs to the ATPase A chain family. In terms of assembly, F-type ATPases have 2 components, CF(1) - the catalytic core - and CF(0) - the membrane proton channel. CF(1) has five subunits: alpha(3), beta(3), gamma(1), delta(1), epsilon(1). CF(0) has three main subunits: a(1), b(2) and c(9-12). The alpha and beta chains form an alternating ring which encloses part of the gamma chain. CF(1) is attached to CF(0) by a central stalk formed by the gamma and epsilon chains, while a peripheral stalk is formed by the delta and b chains.

The protein resides in the cell inner membrane. In terms of biological role, key component of the proton channel; it plays a direct role in the translocation of protons across the membrane. The polypeptide is ATP synthase subunit a (Rhizobium johnstonii (strain DSM 114642 / LMG 32736 / 3841) (Rhizobium leguminosarum bv. viciae)).